The primary structure comprises 347 residues: MLTKRQELILKTIIQDFTKTHEPVGSKTVMNQLSIKVSSATIRNEMAVLEEHGLIEKTHSSSGRVPSTEGYRYYLDNLVQPLQLPEEMYNQIGYQFDQPFNQVDEIVKEAARILSDLTDYTAFAEGPEDKNVSITGFRIVPLAPRQVMAILVISDGSVKNQLYTLPRHISGDEVEQAARLINDQLVGKNLSEINKQTFEQLYSSQIVGKNAPEFLELLESVIKDAASEQMYVDGQLNLLNNIENSDLKAIKSLYELINSSSLAGELIDLSDSPSHYPVHVRLGAELENDLLKDFSLVMAEYSVGRYGRGTIALLGPRHMPYSEMIGLMEYFRQELARKLLDYYGRFK.

This sequence belongs to the HrcA family.

Its function is as follows. Negative regulator of class I heat shock genes (grpE-dnaK-dnaJ and groELS operons). Prevents heat-shock induction of these operons. The protein is Heat-inducible transcription repressor HrcA of Lactobacillus delbrueckii subsp. bulgaricus (strain ATCC BAA-365 / Lb-18).